The chain runs to 303 residues: Methionyl-tRNA formyltransferase (303 aa).

(6S)-5,6,7,8-tetrahydrofolate is bound at residue 108–111 (SDLP).

Belongs to the Fmt family.

It carries out the reaction L-methionyl-tRNA(fMet) + (6R)-10-formyltetrahydrofolate = N-formyl-L-methionyl-tRNA(fMet) + (6S)-5,6,7,8-tetrahydrofolate + H(+). Attaches a formyl group to the free amino group of methionyl-tRNA(fMet). The formyl group appears to play a dual role in the initiator identity of N-formylmethionyl-tRNA by promoting its recognition by IF2 and preventing the misappropriation of this tRNA by the elongation apparatus. The sequence is that of Methionyl-tRNA formyltransferase from Rickettsia prowazekii (strain Madrid E).